The following is a 180-amino-acid chain: ATP-dependent protease subunit HslV (180 aa).

The active site involves Thr-2. The Na(+) site is built by Gly-157, Cys-160, and Ser-163.

It belongs to the peptidase T1B family. HslV subfamily. A double ring-shaped homohexamer of HslV is capped on each side by a ring-shaped HslU homohexamer. The assembly of the HslU/HslV complex is dependent on binding of ATP.

Its subcellular location is the cytoplasm. It carries out the reaction ATP-dependent cleavage of peptide bonds with broad specificity.. Its activity is regulated as follows. Allosterically activated by HslU binding. Protease subunit of a proteasome-like degradation complex believed to be a general protein degrading machinery. The sequence is that of ATP-dependent protease subunit HslV from Wigglesworthia glossinidia brevipalpis.